Reading from the N-terminus, the 155-residue chain is MNKENKSKLEALLEKVANERDLEICGLNIQTNQNPVVIEITIRKTNGDDISLDDCALFNTPASDEIEKSNLLNCSYVLEISSQGVSDELTSERDFKTFKGFPVNVELNQKNSKIKILNGLLYEKSKDYLAINIKGKIKKIPFDEVLKISLCTLKD.

It belongs to the RimP family.

It is found in the cytoplasm. Functionally, required for maturation of 30S ribosomal subunits. The chain is Ribosome maturation factor RimP from Prochlorococcus marinus (strain AS9601).